The sequence spans 299 residues: Phosphatidylserine decarboxylase proenzyme (299 aa).

Residues aspartate 115, histidine 171, and serine 258 each act as charge relay system; for autoendoproteolytic cleavage activity in the active site. The active-site Schiff-base intermediate with substrate; via pyruvic acid; for decarboxylase activity is the serine 258. Pyruvic acid (Ser); by autocatalysis is present on serine 258.

The protein belongs to the phosphatidylserine decarboxylase family. PSD-B subfamily. Prokaryotic type II sub-subfamily. As to quaternary structure, heterodimer of a large membrane-associated beta subunit and a small pyruvoyl-containing alpha subunit. It depends on pyruvate as a cofactor. Is synthesized initially as an inactive proenzyme. Formation of the active enzyme involves a self-maturation process in which the active site pyruvoyl group is generated from an internal serine residue via an autocatalytic post-translational modification. Two non-identical subunits are generated from the proenzyme in this reaction, and the pyruvate is formed at the N-terminus of the alpha chain, which is derived from the carboxyl end of the proenzyme. The autoendoproteolytic cleavage occurs by a canonical serine protease mechanism, in which the side chain hydroxyl group of the serine supplies its oxygen atom to form the C-terminus of the beta chain, while the remainder of the serine residue undergoes an oxidative deamination to produce ammonia and the pyruvoyl prosthetic group on the alpha chain. During this reaction, the Ser that is part of the protease active site of the proenzyme becomes the pyruvoyl prosthetic group, which constitutes an essential element of the active site of the mature decarboxylase.

The protein resides in the cell membrane. The catalysed reaction is a 1,2-diacyl-sn-glycero-3-phospho-L-serine + H(+) = a 1,2-diacyl-sn-glycero-3-phosphoethanolamine + CO2. It participates in phospholipid metabolism; phosphatidylethanolamine biosynthesis; phosphatidylethanolamine from CDP-diacylglycerol: step 2/2. Functionally, catalyzes the formation of phosphatidylethanolamine (PtdEtn) from phosphatidylserine (PtdSer). The chain is Phosphatidylserine decarboxylase proenzyme from Chlamydia caviae (strain ATCC VR-813 / DSM 19441 / 03DC25 / GPIC) (Chlamydophila caviae).